A 218-amino-acid polypeptide reads, in one-letter code: Uracil-DNA glycosylase (218 aa).

Asp68 functions as the Proton acceptor in the catalytic mechanism.

The protein belongs to the uracil-DNA glycosylase (UDG) superfamily. UNG family. As to quaternary structure, homodimer. Interacts with protein OPG148. Component of the Uracil-DNA glycosylase(UDG)-OPG148-polymerase complex; OPG148 and UDG form a heterodimeric processivity factor that associates with OPG71 to form the processive polymerase holoenzyme.

It catalyses the reaction Hydrolyzes single-stranded DNA or mismatched double-stranded DNA and polynucleotides, releasing free uracil.. Its function is as follows. Plays an essential role in viral replication as a component of the DNA polymerase processivity factor. Excises uracil residues from the DNA which can arise as a result of misincorporation of dUMP residues by DNA polymerase or due to deamination of cytosine. The sequence is that of Uracil-DNA glycosylase (OPG116) from Homo sapiens (Human).